The sequence spans 198 residues: Snake venom metalloproteinase neuwiedase (198 aa).

Residues 8–198 (RYIELVIVAD…QTFLTNHNPQ (191 aa)) form the Peptidase M12B domain. Ca(2+) contacts are provided by glutamate 11 and aspartate 95. Zn(2+) is bound at residue histidine 144. Glutamate 145 is an active-site residue. Positions 148 and 154 each coordinate Zn(2+). Disulfide bonds link cysteine 159–cysteine 183 and cysteine 161–cysteine 166.

It belongs to the venom metalloproteinase (M12B) family. P-I subfamily. Zn(2+) serves as cofactor. As to expression, expressed by the venom gland.

The protein resides in the secreted. Its activity is regulated as follows. Inhibited by EDTA, EGTA and 1,10-phenanthroline, partially inhibited by beta-mercaptoethanol and not inhibited by serine protease inhibitors (leupeptin and aprotinin). Also inhibited by an excess of zinc, mercury and magnesium ions. Extracts of the plant Casearia mariquitensis neutralizes the decrease of platelets and plasma fibrinogen induced by the protease. The same extracts also partially inhibit Bbeta chain cleavage, but not Aalpha chain cleavage. This metalloprotease hydrolyzes the Aalpha chain of fibrin and fibrinogen first followed by the Bbeta chain and shows no effect on the gamma chain. It is also able to degrade type I collagen, fibronectin, laminin and induces inflammatory reaction. It is devoid of hemorrhagic and thrombotic activities, except in lung where it induces pulmonary bleeding. It also induces a mild myotoxic reaction. It is not able to inhibit platelet aggregation, but it induces decrease of platelets and plasma fibrinogen. It contributes to local tissue damage by inducing edema, inflammatory infiltrate and mild myotoxicity, and by degrading extracellular matrix components. The polypeptide is Snake venom metalloproteinase neuwiedase (Bothrops pauloensis (Neuwied's lancehead)).